A 270-amino-acid chain; its full sequence is MAAWAERLSGVRGVLLDISGVLYDSGTGGGAAIAGSVEAVARLKRSPLKVRFCTNESQKSRRELVGVLQRLGFDISEGEVTAPAPATCQILKERGLRPHLLIHEGVRSEFDDIDMSNPNCVVIADAGEGFSYQNMNRAFQVLMELENPVLISLGKGRYYKETSGLMLDVGGYMKALEYACGIEAEVVGKPSPEFFRSALQAIGVEAHQAIMIGDDIVGDVGGAQQCGMRALQVRTGKFRPGDEHHPEVRADGYVDNLAEAVDLLLQHMDK.

The Mg(2+) site is built by Asp-17 and Ser-19. Substrate-binding positions include 17–19 (DIS), 54–55 (TN), and Lys-189. Asp-214 is a binding site for Mg(2+).

This sequence belongs to the HAD-like hydrolase superfamily. Homodimer. Mg(2+) serves as cofactor.

The protein resides in the cytoplasm. It is found in the nucleus. It catalyses the reaction diphosphate + H2O = 2 phosphate + H(+). Phosphatase that hydrolyzes imidodiphosphate, 3-phosphohistidine and 6-phospholysine. Has broad substrate specificity and can also hydrolyze inorganic diphosphate, but with lower efficiency. The sequence is that of Phospholysine phosphohistidine inorganic pyrophosphate phosphatase (Lhpp) from Rattus norvegicus (Rat).